Consider the following 578-residue polypeptide: Arginine--tRNA ligase (578 aa).

Residues 127–137 carry the 'HIGH' region motif; that stretch reads PNLAKEMHVGH.

The protein belongs to the class-I aminoacyl-tRNA synthetase family. As to quaternary structure, monomer.

It is found in the cytoplasm. It catalyses the reaction tRNA(Arg) + L-arginine + ATP = L-arginyl-tRNA(Arg) + AMP + diphosphate. This Pseudomonas putida (strain GB-1) protein is Arginine--tRNA ligase.